Consider the following 137-residue polypeptide: Phosphoribosyl-AMP cyclohydrolase (137 aa).

A Mg(2+)-binding site is contributed by D84. C85 serves as a coordination point for Zn(2+). Mg(2+)-binding residues include D86 and D88. Residues C101 and C108 each contribute to the Zn(2+) site.

This sequence belongs to the PRA-CH family. As to quaternary structure, homodimer. Requires Mg(2+) as cofactor. Zn(2+) serves as cofactor.

Its subcellular location is the cytoplasm. It catalyses the reaction 1-(5-phospho-beta-D-ribosyl)-5'-AMP + H2O = 1-(5-phospho-beta-D-ribosyl)-5-[(5-phospho-beta-D-ribosylamino)methylideneamino]imidazole-4-carboxamide. It participates in amino-acid biosynthesis; L-histidine biosynthesis; L-histidine from 5-phospho-alpha-D-ribose 1-diphosphate: step 3/9. Its function is as follows. Catalyzes the hydrolysis of the adenine ring of phosphoribosyl-AMP. This chain is Phosphoribosyl-AMP cyclohydrolase, found in Pelodictyon phaeoclathratiforme (strain DSM 5477 / BU-1).